The primary structure comprises 583 residues: Pectinesterase/pectinesterase inhibitor U1 (583 aa).

Positions 1-40 (MTRVEDFFSKQIDFCKRKKKIYLAIVASVLLVAAVIGVVA) are cleaved as a signal peptide. Positions 60–221 (SSAHAIVKSA…EKMCSNALAM (162 aa)) are pectinesterase inhibitor U1. N-linked (GlcNAc...) asparagine glycans are attached at residues Asn85, Asn105, and Asn224. The tract at residues 272 to 570 (DVVVAADGSG…TPGRFIAGGS (299 aa)) is pectinesterase U1. Substrate contacts are provided by Thr347 and Gln377. The active-site Proton donor; for pectinesterase activity is Asp400. Cys414 and Cys434 form a disulfide bridge. Catalysis depends on Asp421, which acts as the Nucleophile; for pectinesterase activity. 2 residues coordinate substrate: Arg489 and Trp491.

The protein in the N-terminal section; belongs to the PMEI family. This sequence in the C-terminal section; belongs to the pectinesterase family.

It is found in the secreted. It localises to the cell wall. The catalysed reaction is [(1-&gt;4)-alpha-D-galacturonosyl methyl ester](n) + n H2O = [(1-&gt;4)-alpha-D-galacturonosyl](n) + n methanol + n H(+). Its pathway is glycan metabolism; pectin degradation; 2-dehydro-3-deoxy-D-gluconate from pectin: step 1/5. Its function is as follows. Acts in the modification of cell walls via demethylesterification of cell wall pectin. In Solanum lycopersicum (Tomato), this protein is Pectinesterase/pectinesterase inhibitor U1 (PMEU1).